A 256-amino-acid chain; its full sequence is Triosephosphate isomerase (256 aa).

9-11 (NWK) is a binding site for substrate. His-97 acts as the Electrophile in catalysis. Catalysis depends on Glu-169, which acts as the Proton acceptor. Substrate is bound by residues Gly-175, Ser-214, and 235-236 (GG).

It belongs to the triosephosphate isomerase family. Homodimer.

It is found in the cytoplasm. The catalysed reaction is D-glyceraldehyde 3-phosphate = dihydroxyacetone phosphate. It functions in the pathway carbohydrate biosynthesis; gluconeogenesis. The protein operates within carbohydrate degradation; glycolysis; D-glyceraldehyde 3-phosphate from glycerone phosphate: step 1/1. In terms of biological role, involved in the gluconeogenesis. Catalyzes stereospecifically the conversion of dihydroxyacetone phosphate (DHAP) to D-glyceraldehyde-3-phosphate (G3P). The chain is Triosephosphate isomerase from Vibrio vulnificus (strain CMCP6).